Consider the following 337-residue polypeptide: Glycerol-3-phosphate dehydrogenase [NAD(P)+] (337 aa).

Positions 11, 30, and 102 each coordinate NADPH. Residues Lys102, Gly138, and Ser140 each coordinate sn-glycerol 3-phosphate. Residue Ala142 coordinates NADPH. Sn-glycerol 3-phosphate-binding residues include Lys193, Asp246, Ser256, Arg257, and Asn258. The active-site Proton acceptor is Lys193. Arg257 is an NADPH binding site. The NADPH site is built by Val281 and Glu283.

The protein belongs to the NAD-dependent glycerol-3-phosphate dehydrogenase family.

The protein resides in the cytoplasm. It catalyses the reaction sn-glycerol 3-phosphate + NAD(+) = dihydroxyacetone phosphate + NADH + H(+). It carries out the reaction sn-glycerol 3-phosphate + NADP(+) = dihydroxyacetone phosphate + NADPH + H(+). It participates in membrane lipid metabolism; glycerophospholipid metabolism. In terms of biological role, catalyzes the reduction of the glycolytic intermediate dihydroxyacetone phosphate (DHAP) to sn-glycerol 3-phosphate (G3P), the key precursor for phospholipid synthesis. The polypeptide is Glycerol-3-phosphate dehydrogenase [NAD(P)+] (Variovorax paradoxus (strain S110)).